A 470-amino-acid polypeptide reads, in one-letter code: L-seryl-tRNA(Sec) selenium transferase (470 aa).

Lys294 carries the N6-(pyridoxal phosphate)lysine modification.

It belongs to the SelA family. Pyridoxal 5'-phosphate serves as cofactor.

The protein resides in the cytoplasm. The enzyme catalyses L-seryl-tRNA(Sec) + selenophosphate + H(+) = L-selenocysteinyl-tRNA(Sec) + phosphate. Its pathway is aminoacyl-tRNA biosynthesis; selenocysteinyl-tRNA(Sec) biosynthesis; selenocysteinyl-tRNA(Sec) from L-seryl-tRNA(Sec) (bacterial route): step 1/1. In terms of biological role, converts seryl-tRNA(Sec) to selenocysteinyl-tRNA(Sec) required for selenoprotein biosynthesis. This Solidesulfovibrio magneticus (strain ATCC 700980 / DSM 13731 / RS-1) (Desulfovibrio magneticus) protein is L-seryl-tRNA(Sec) selenium transferase.